A 32-amino-acid chain; its full sequence is Ranatuerin-2BYa (32 aa).

A disulfide bridge connects residues Cys27 and Cys32.

In terms of tissue distribution, expressed by the skin glands.

The protein localises to the secreted. In terms of biological role, antibacterial activity against Gram-positive bacterium S.aureus and Gram-negative bacterium E.coli. Weak hemolytic activity. This chain is Ranatuerin-2BYa, found in Rana boylii (Foothill yellow-legged frog).